The primary structure comprises 150 residues: D-aminoacyl-tRNA deacylase (150 aa).

Residues 138–139 carry the Gly-cisPro motif, important for rejection of L-amino acids motif; it reads GP.

The protein belongs to the DTD family. Homodimer.

The protein resides in the cytoplasm. The catalysed reaction is glycyl-tRNA(Ala) + H2O = tRNA(Ala) + glycine + H(+). The enzyme catalyses a D-aminoacyl-tRNA + H2O = a tRNA + a D-alpha-amino acid + H(+). An aminoacyl-tRNA editing enzyme that deacylates mischarged D-aminoacyl-tRNAs. Also deacylates mischarged glycyl-tRNA(Ala), protecting cells against glycine mischarging by AlaRS. Acts via tRNA-based rather than protein-based catalysis; rejects L-amino acids rather than detecting D-amino acids in the active site. By recycling D-aminoacyl-tRNA to D-amino acids and free tRNA molecules, this enzyme counteracts the toxicity associated with the formation of D-aminoacyl-tRNA entities in vivo and helps enforce protein L-homochirality. The polypeptide is D-aminoacyl-tRNA deacylase (Dechloromonas aromatica (strain RCB)).